A 351-amino-acid polypeptide reads, in one-letter code: S-adenosylmethionine:tRNA ribosyltransferase-isomerase (351 aa).

This sequence belongs to the QueA family. As to quaternary structure, monomer.

It is found in the cytoplasm. The enzyme catalyses 7-aminomethyl-7-carbaguanosine(34) in tRNA + S-adenosyl-L-methionine = epoxyqueuosine(34) in tRNA + adenine + L-methionine + 2 H(+). Its pathway is tRNA modification; tRNA-queuosine biosynthesis. Functionally, transfers and isomerizes the ribose moiety from AdoMet to the 7-aminomethyl group of 7-deazaguanine (preQ1-tRNA) to give epoxyqueuosine (oQ-tRNA). The protein is S-adenosylmethionine:tRNA ribosyltransferase-isomerase of Fusobacterium nucleatum subsp. nucleatum (strain ATCC 25586 / DSM 15643 / BCRC 10681 / CIP 101130 / JCM 8532 / KCTC 2640 / LMG 13131 / VPI 4355).